The sequence spans 533 residues: ATP synthase F(1) complex catalytic subunit beta, mitochondrial (533 aa).

The N-terminal 53 residues, 1-53 (MLGLAGRCSAAAASAARPALRRAAGPSHGFLPLLLSRGAGPAAAVGARRDHAA), are a transit peptide targeting the mitochondrion. The ADP site is built by Gly-214, Val-215, Gly-216, Lys-217, Thr-218, and Val-219. Gly-214 contributes to the ATP binding site. Residues Gly-214, Val-215, Gly-216, Lys-217, and Thr-218 each coordinate phosphate. ATP-binding residues include Gly-216, Lys-217, Thr-218, and Val-219. A Mg(2+)-binding site is contributed by Thr-218. Residue Glu-243 coordinates Mg(2+). ATP is bound at residue Arg-244.

As to quaternary structure, homotrimer. Component of the ATP synthase complex composed at least of ATP5F1A/subunit alpha, ATP5F1B/subunit beta, ATP5MC1/subunit c (homooctomer), MT-ATP6/subunit a, MT-ATP8/subunit 8, ATP5ME/subunit e, ATP5MF/subunit f, ATP5MG/subunit g, ATP5MK/subunit k, ATP5MJ/subunit j, ATP5F1C/subunit gamma, ATP5F1D/subunit delta, ATP5F1E/subunit epsilon, ATP5PF/subunit F6, ATP5PB/subunit b, ATP5PD/subunit d, ATP5PO/subunit OSCP. ATP synthase complex consists of a soluble F(1) head domain (subunits alpha(3) and beta(3)) - the catalytic core - and a membrane F(0) domain - the membrane proton channel (subunits c, a, 8, e, f, g, k and j). These two domains are linked by a central stalk (subunits gamma, delta, and epsilon) rotating inside the F1 region and a stationary peripheral stalk (subunits F6, b, d, and OSCP).

It is found in the mitochondrion inner membrane. It catalyses the reaction ATP + H2O + 4 H(+)(in) = ADP + phosphate + 5 H(+)(out). Catalytic subunit beta, of the mitochondrial membrane ATP synthase complex (F(1)F(0) ATP synthase or Complex V) that produces ATP from ADP in the presence of a proton gradient across the membrane which is generated by electron transport complexes of the respiratory chain. ATP synthase complex consist of a soluble F(1) head domain - the catalytic core - and a membrane F(1) domain - the membrane proton channel. These two domains are linked by a central stalk rotating inside the F(1) region and a stationary peripheral stalk. During catalysis, ATP synthesis in the catalytic domain of F(1) is coupled via a rotary mechanism of the central stalk subunits to proton translocation. In vivo, can only synthesize ATP although its ATP hydrolase activity can be activated artificially in vitro. With the subunit alpha (ATP5F1A), forms the catalytic core in the F(1) domain. The sequence is that of ATP synthase F(1) complex catalytic subunit beta, mitochondrial from Gallus gallus (Chicken).